The following is a 54-amino-acid chain: Large ribosomal subunit protein bL32c (54 aa).

The segment covering Met1 to Ala25 has biased composition (basic residues). Residues Met1–Lys26 form a disordered region.

The protein belongs to the bacterial ribosomal protein bL32 family.

The protein localises to the plastid. The protein resides in the chloroplast. This is Large ribosomal subunit protein bL32c from Thalassiosira pseudonana (Marine diatom).